A 150-amino-acid chain; its full sequence is Globin (150 aa).

The region spanning 11-150 (PLSAAEKTKI…MICILLRSAY (140 aa)) is the Globin domain. 2 residues coordinate heme b: H74 and H106.

It belongs to the globin family. Monomer.

The protein is Globin of Lampetra fluviatilis (European river lamprey).